The chain runs to 154 residues: Large ribosomal subunit protein uL30 (154 aa).

A disordered region spans residues 114 to 139 (PVLRLHPPRGGHRGQKHPTAEGGQIG). Positions 119–129 (HPPRGGHRGQK) are enriched in basic residues.

The protein belongs to the universal ribosomal protein uL30 family. As to quaternary structure, part of the 50S ribosomal subunit.

The sequence is that of Large ribosomal subunit protein uL30 from Haloquadratum walsbyi (strain DSM 16790 / HBSQ001).